The chain runs to 477 residues: Cytochrome b mRNA maturase bI3 (477 aa).

A cytochrome b region spans residues 1 to 163 (MRLLKSHPLL…IPWIGQDIVE (163 aa)). 5 consecutive transmembrane segments (helical) span residues 32-52 (FGSL…TLAM), 86-106 (ASAF…YGSY), 113-133 (VWAI…LGYV), 142-162 (WGAT…QDIV), and 166-186 (IITL…VVVY). The interval 164 to 477 (SKIITLIINL…YSTLNYPDAK (314 aa)) is maturase.

In the N-terminal section; belongs to the cytochrome b family. It in the C-terminal section; belongs to the LAGLIDADG endonuclease family.

The protein resides in the mitochondrion inner membrane. In terms of biological role, mitochondrial mRNA maturase required for splicing of intron 3 of the cytochrome b (cob) gene, containing its own coding sequence. This is Cytochrome b mRNA maturase bI3 (bI3) from Neurospora crassa (strain ATCC 24698 / 74-OR23-1A / CBS 708.71 / DSM 1257 / FGSC 987).